We begin with the raw amino-acid sequence, 440 residues long: UDP-glycosyltransferase 87A1 (440 aa).

Residues serine 263, cysteine 312–glutamine 314, histidine 329–glutamate 337, and phenylalanine 351–glutamine 354 contribute to the UDP-alpha-D-glucose site.

The protein belongs to the UDP-glycosyltransferase family.

This chain is UDP-glycosyltransferase 87A1 (UGT87A1), found in Arabidopsis thaliana (Mouse-ear cress).